We begin with the raw amino-acid sequence, 365 residues long: tRNA-specific 2-thiouridylase MnmA (365 aa).

ATP-binding positions include 9 to 16 and methionine 35; that span reads AMSGGVDS. Cysteine 105 serves as the catalytic Nucleophile. The cysteines at positions 105 and 203 are disulfide-linked. Glycine 129 contacts ATP. The tract at residues 153-155 is interaction with tRNA; the sequence is KDQ. Catalysis depends on cysteine 203, which acts as the Cysteine persulfide intermediate. The tract at residues 308-309 is interaction with tRNA; it reads RY.

The protein belongs to the MnmA/TRMU family.

It is found in the cytoplasm. It carries out the reaction S-sulfanyl-L-cysteinyl-[protein] + uridine(34) in tRNA + AH2 + ATP = 2-thiouridine(34) in tRNA + L-cysteinyl-[protein] + A + AMP + diphosphate + H(+). Its function is as follows. Catalyzes the 2-thiolation of uridine at the wobble position (U34) of tRNA, leading to the formation of s(2)U34. This Pelotomaculum thermopropionicum (strain DSM 13744 / JCM 10971 / SI) protein is tRNA-specific 2-thiouridylase MnmA.